Consider the following 557-residue polypeptide: MRSDLMKKGVEKAPHRSLFKAMGYTQTELDRPLIGVANSANEIIPGHIHLDKVAEAVKAGIRLAGGTPIEFSTIGVCDGIAMNHAGMRYSLASRELIADSVEIMSMAHPFDGLVAVPNCDKIIPGMLMAMLRLDIPAILISGGPMLAGRAGHKQVDLVSVFEAVGSFKAGTITMEELEQLEDYACPGCGSCAGMFTANSMNCLSEALGLALPGNGTIPAVTGARMRLAKLAGMRIVELIKADIRPRQIATQKAFENAITVDMALGCSTNTVLHVPAIAREAGIDLDLGLFNTLSSRTPHLCSLRPGGPHFLENLDQAGGVQAVMKELLARDLIHRDAMTVTGLTVGKNLESSKNTDPTVIRPISDPYHNEGGIAILYGNLAPEGAVVKQSAVAPEMLQRTCRARVFESETDAAGGILDGKIKPGDVVVIRYEGPKGGPGMQEMLTPTAAIIGMGLGKDVALITDGRFSGGTQGAAIGHVSPEAAVGGPIALIEEGDEILVDILNKRLELMVDDATLKARRDKWKAPAPRMTQGYLARYAHMVTSGSTGAVLRTEQDK.

Mg(2+) is bound at residue Asp78. Cys119 contributes to the [2Fe-2S] cluster binding site. The Mg(2+) site is built by Asp120 and Lys121. N6-carboxylysine is present on Lys121. Cys191 contacts [2Fe-2S] cluster. Mg(2+) is bound at residue Glu442. Residue Ser468 is the Proton acceptor of the active site.

Belongs to the IlvD/Edd family. Homodimer. Requires [2Fe-2S] cluster as cofactor. It depends on Mg(2+) as a cofactor.

It catalyses the reaction (2R)-2,3-dihydroxy-3-methylbutanoate = 3-methyl-2-oxobutanoate + H2O. It carries out the reaction (2R,3R)-2,3-dihydroxy-3-methylpentanoate = (S)-3-methyl-2-oxopentanoate + H2O. Its pathway is amino-acid biosynthesis; L-isoleucine biosynthesis; L-isoleucine from 2-oxobutanoate: step 3/4. The protein operates within amino-acid biosynthesis; L-valine biosynthesis; L-valine from pyruvate: step 3/4. Functionally, functions in the biosynthesis of branched-chain amino acids. Catalyzes the dehydration of (2R,3R)-2,3-dihydroxy-3-methylpentanoate (2,3-dihydroxy-3-methylvalerate) into 2-oxo-3-methylpentanoate (2-oxo-3-methylvalerate) and of (2R)-2,3-dihydroxy-3-methylbutanoate (2,3-dihydroxyisovalerate) into 2-oxo-3-methylbutanoate (2-oxoisovalerate), the penultimate precursor to L-isoleucine and L-valine, respectively. This Syntrophobacter fumaroxidans (strain DSM 10017 / MPOB) protein is Dihydroxy-acid dehydratase.